Reading from the N-terminus, the 372-residue chain is Putative 8-amino-7-oxononanoate synthase (372 aa).

Arg-20 is a binding site for substrate. Residue 94-95 (GY) participates in pyridoxal 5'-phosphate binding. His-119 is a binding site for substrate. Pyridoxal 5'-phosphate-binding positions include Ser-167, 192 to 195 (DDAH), and 223 to 226 (TLSK). Lys-226 carries the N6-(pyridoxal phosphate)lysine modification. Thr-337 provides a ligand contact to substrate.

This sequence belongs to the class-II pyridoxal-phosphate-dependent aminotransferase family. BioF subfamily. Homodimer. The cofactor is pyridoxal 5'-phosphate.

It catalyses the reaction 6-carboxyhexanoyl-[ACP] + L-alanine + H(+) = (8S)-8-amino-7-oxononanoate + holo-[ACP] + CO2. It functions in the pathway cofactor biosynthesis; biotin biosynthesis. Functionally, catalyzes the decarboxylative condensation of pimeloyl-[acyl-carrier protein] and L-alanine to produce 8-amino-7-oxononanoate (AON), [acyl-carrier protein], and carbon dioxide. In Methanocaldococcus jannaschii (strain ATCC 43067 / DSM 2661 / JAL-1 / JCM 10045 / NBRC 100440) (Methanococcus jannaschii), this protein is Putative 8-amino-7-oxononanoate synthase (bioF).